Reading from the N-terminus, the 377-residue chain is Acetyltransferase ple2 (377 aa).

The first 27 residues, 1–27, serve as a signal peptide directing secretion; the sequence is MKPFSPELLVLSFILLVLSCAIRPAKG. A run of 4 helical transmembrane segments spans residues 29 to 49, 56 to 76, 176 to 196, and 258 to 278; these read WILW…TTGD, IANN…LTDV, IAAW…ALSL, and PALY…HAIG.

Belongs to the wax synthase family.

The protein localises to the membrane. It participates in secondary metabolite biosynthesis; terpenoid biosynthesis. Its function is as follows. Acetyltransferase; part of the gene cluster that mediates the biosynthesis of pleuromutilin, a tricyclic diterpene showing antibacterial properties. The geranylgeranyl diphosphate (GGPP) synthase ple4 catalyzes the first step in pleuromutilin biosynthesis. GGPP is then substrate of the premutilin synthase (PS) ple3 to yield premutilin. Premutilin synthase is a bifunctional enzyme composed of the fusion of a class II diterpene cyclase (DTC) and a class I diterpene synthase (DTS), with the corresponding domains and active sites containing characteristic aspartate-rich motifs. GGPP is first converted to mutildienyl-diphosphate (MPP) at the class II DTC site. MPP is subsequently further cyclized at the class I DTS site, followed by a 1,5-hydride shift and addition of water prior to terminating deprotonation, to yield premutilin. The cytochrome P450 monooxygenases ple5 and ple6 hydroxylate premutilin at C-11 and C-3, respectively, producing 11-hydroxypremutilin and 3-hydroxypremutilin. The combination of the actions of both ple5 and ple6 leads to the production of 3,11-dihydroxypremutilin. The short chain dehydrogenase ple7 further converts 3,11-dihydroxypremutilin into mutilin. The acetyltransferase ple2 then acetylates mutilin to produce 14-O-acetylmutilin. Finally, the cytochrome P450 monooxygenase ple1 catalyzes hydroxylation on the alpha position of the acetyl side chain of 14-O-acetylmutilin to yield pleuromutilin. This Rhodocybe pseudopiperita (Clitopilus pseudopiperitus) protein is Acetyltransferase ple2.